A 236-amino-acid polypeptide reads, in one-letter code: Purine nucleoside phosphorylase DeoD-type 1 (236 aa).

Residue His-5 participates in a purine D-ribonucleoside binding. Phosphate contacts are provided by residues Gly-21, Arg-25, Arg-44, and 88–91; that span reads RVGS. A purine D-ribonucleoside is bound by residues 180–182 and 204–205; these read EME and TD. Asp-205 serves as the catalytic Proton donor.

The protein belongs to the PNP/UDP phosphorylase family. Homohexamer; trimer of homodimers.

It carries out the reaction a purine D-ribonucleoside + phosphate = a purine nucleobase + alpha-D-ribose 1-phosphate. The catalysed reaction is a purine 2'-deoxy-D-ribonucleoside + phosphate = a purine nucleobase + 2-deoxy-alpha-D-ribose 1-phosphate. Catalyzes the reversible phosphorolytic breakdown of the N-glycosidic bond in the beta-(deoxy)ribonucleoside molecules, with the formation of the corresponding free purine bases and pentose-1-phosphate. This Shewanella oneidensis (strain ATCC 700550 / JCM 31522 / CIP 106686 / LMG 19005 / NCIMB 14063 / MR-1) protein is Purine nucleoside phosphorylase DeoD-type 1.